A 163-amino-acid chain; its full sequence is Nucleotide-binding protein ECA1137 (163 aa).

It belongs to the YajQ family.

Its function is as follows. Nucleotide-binding protein. This is Nucleotide-binding protein ECA1137 from Pectobacterium atrosepticum (strain SCRI 1043 / ATCC BAA-672) (Erwinia carotovora subsp. atroseptica).